The following is a 56-amino-acid chain: Large ribosomal subunit protein bL33B (56 aa).

The protein belongs to the bacterial ribosomal protein bL33 family.

The sequence is that of Large ribosomal subunit protein bL33B from Cutibacterium acnes (strain DSM 16379 / KPA171202) (Propionibacterium acnes).